We begin with the raw amino-acid sequence, 495 residues long: ESX-2 secretion system ATPase EccB2 (495 aa).

Residues 43–63 (LALSMVLVAIAAGWMMLLNVL) form a helical membrane-spanning segment.

The protein belongs to the EccB family. As to quaternary structure, part of the ESX-2 / type VII secretion system (T7SS), which is composed of cytosolic and membrane components.

The protein localises to the cell membrane. Its function is as follows. An ATPase. This chain is ESX-2 secretion system ATPase EccB2 (eccB2), found in Mycobacterium tuberculosis (strain CDC 1551 / Oshkosh).